The chain runs to 264 residues: Phosphonoacetaldehyde hydrolase (264 aa).

Asp9 acts as the Nucleophile in catalysis. The Mg(2+) site is built by Asp9 and Ala11. Residue Lys50 is the Schiff-base intermediate with substrate of the active site. Asp183 serves as a coordination point for Mg(2+).

This sequence belongs to the HAD-like hydrolase superfamily. PhnX family. In terms of assembly, homodimer. It depends on Mg(2+) as a cofactor.

The enzyme catalyses phosphonoacetaldehyde + H2O = acetaldehyde + phosphate + H(+). Involved in phosphonate degradation. This chain is Phosphonoacetaldehyde hydrolase, found in Bacillus cereus (strain ATCC 14579 / DSM 31 / CCUG 7414 / JCM 2152 / NBRC 15305 / NCIMB 9373 / NCTC 2599 / NRRL B-3711).